The following is a 204-amino-acid chain: Large ribosomal subunit protein uL4 (204 aa).

A disordered region spans residues 53-74 (AYVSGGGKKPWRQKGRGGARAG).

Belongs to the universal ribosomal protein uL4 family. As to quaternary structure, part of the 50S ribosomal subunit.

Its function is as follows. One of the primary rRNA binding proteins, this protein initially binds near the 5'-end of the 23S rRNA. It is important during the early stages of 50S assembly. It makes multiple contacts with different domains of the 23S rRNA in the assembled 50S subunit and ribosome. Forms part of the polypeptide exit tunnel. The sequence is that of Large ribosomal subunit protein uL4 from Campylobacter curvus (strain 525.92).